The primary structure comprises 201 residues: Kunitz type trypsin inhibitor 104 (201 aa).

Residues 1–24 (MSTRSLTIFILAHVWLLMATTSIA) form the signal peptide. 3 cysteine pairs are disulfide-bonded: cysteine 63–cysteine 110, cysteine 161–cysteine 173, and cysteine 166–cysteine 169.

It belongs to the protease inhibitor I3 (leguminous Kunitz-type inhibitor) family. Interacts with CP.

It is found in the secreted. It localises to the extracellular space. The protein localises to the apoplast. In terms of biological role, protease inhibitor involved in the control of mycorrhiza establishment and arbuscule development during root colonization by arbuscular mycorrhizal (AM) fungi (e.g. Rhizophagus irregularis). In Medicago truncatula (Barrel medic), this protein is Kunitz type trypsin inhibitor 104.